The chain runs to 420 residues: Glucose-1-phosphate adenylyltransferase (420 aa).

Residues Tyr-107, Gly-172, 187 to 188 (EK), and Ser-205 each bind alpha-D-glucose 1-phosphate.

Belongs to the bacterial/plant glucose-1-phosphate adenylyltransferase family. As to quaternary structure, homotetramer.

It carries out the reaction alpha-D-glucose 1-phosphate + ATP + H(+) = ADP-alpha-D-glucose + diphosphate. It participates in glycan biosynthesis; glycogen biosynthesis. Functionally, involved in the biosynthesis of ADP-glucose, a building block required for the elongation reactions to produce glycogen. Catalyzes the reaction between ATP and alpha-D-glucose 1-phosphate (G1P) to produce pyrophosphate and ADP-Glc. The polypeptide is Glucose-1-phosphate adenylyltransferase (Rhodopseudomonas palustris (strain HaA2)).